Consider the following 542-residue polypeptide: Organic anion transporter 3 (542 aa).

At 1–9 the chain is on the cytoplasmic side; it reads MTFSEILDR. The residue at position 4 (Ser-4) is a Phosphoserine. The helical transmembrane segment at 10-30 threads the bilayer; that stretch reads VGSMGPFQFLHVALLGFPILG. Residues 31 to 123 lie on the Extracellular side of the membrane; the sequence is MANHNLLQIF…LVCSSNKLKE (93 aa). Asn-86 is a glycosylation site (N-linked (GlcNAc...) asparagine). The chain crosses the membrane as a helical span at residues 124–144; it reads MAQSIFMAGILIGGLVLGDLS. The Cytoplasmic segment spans residues 145-150; it reads DRFGRK. Residues 151–171 traverse the membrane as a helical segment; sequence PILTCCYLLLAASGSSTAFSP. The Extracellular segment spans residues 172–176; sequence TLPIY. Residues 177 to 197 traverse the membrane as a helical segment; it reads MVFRFLCGFSISGISLSTVIL. At 198 to 212 the chain is on the cytoplasmic side; that stretch reads NVEWVPTKMRAITST. The chain crosses the membrane as a helical span at residues 213–233; it reads AIGYCYTIGQFILPGLAYAIP. The Extracellular portion of the chain corresponds to 234–236; it reads QWR. Residues 237–257 form a helical membrane-spanning segment; the sequence is WLQLTVSVPYFIFSLLSWWIP. Residues 258-327 lie on the Cytoplasmic side of the membrane; it reads ESIRWLVLAG…FRTPILRRVT (70 aa). The chain crosses the membrane as a helical span at residues 328–348; it reads LCLSLAWFATGFAYYSLAMGV. Residues 349–354 lie on the Extracellular side of the membrane; it reads EEFGVN. A helical membrane pass occupies residues 355–375; it reads IYILQIIFGGVDIPAKFITIL. Residues 376–389 lie on the Cytoplasmic side of the membrane; that stretch reads SLSYLGRHITQGAA. A helical membrane pass occupies residues 390–410; sequence LILAGAAILSLIFVPMDMSLL. A topological domain (extracellular) is located at residue Arg-411. A helical membrane pass occupies residues 412–432; it reads TILAVFGKGCLSGSFSCLFLY. The Cytoplasmic portion of the chain corresponds to 433–471; the sequence is TSELFPTVIRQTGMGISNVWARVGSMISPLVKITGEIQP. The chain crosses the membrane as a helical span at residues 472-492; the sequence is FIPNIIYGTVALLGGSAALFL. Residues 493-542 lie on the Extracellular side of the membrane; sequence PETLNQPLPETLEDMENWFLQSKKLKQEPEAEKASQRIPLQPSGPGVDRS. The span at 518–527 shows a compositional bias: basic and acidic residues; the sequence is KQEPEAEKAS. A disordered region spans residues 518–542; it reads KQEPEAEKASQRIPLQPSGPGVDRS.

This sequence belongs to the major facilitator (TC 2.A.1) superfamily. Organic cation transporter (TC 2.A.1.19) family.

The protein localises to the basolateral cell membrane. It catalyses the reaction estrone 3-sulfate(out) + glutarate(in) = estrone 3-sulfate(in) + glutarate(out). The catalysed reaction is estrone 3-sulfate(in) + 2-oxoglutarate(out) = estrone 3-sulfate(out) + 2-oxoglutarate(in). The enzyme catalyses glutarate(in) + 2-oxoglutarate(out) = glutarate(out) + 2-oxoglutarate(in). It carries out the reaction urate(in) + 2-oxoglutarate(out) = urate(out) + 2-oxoglutarate(in). It catalyses the reaction taurocholate(out) + glutarate(in) = taurocholate(in) + glutarate(out). The catalysed reaction is dehydroepiandrosterone 3-sulfate(out) + glutarate(in) = dehydroepiandrosterone 3-sulfate(in) + glutarate(out). The enzyme catalyses prostaglandin F2alpha(out) + glutarate(in) = prostaglandin F2alpha(in) + glutarate(out). It carries out the reaction prostaglandin F2alpha(out) + 2-oxoglutarate(in) = prostaglandin F2alpha(in) + 2-oxoglutarate(out). It catalyses the reaction (R)-carnitine(out) + 2-oxoglutarate(in) = (R)-carnitine(in) + 2-oxoglutarate(out). The catalysed reaction is glutarate(in) + (R)-carnitine(out) = glutarate(out) + (R)-carnitine(in). The enzyme catalyses prostaglandin E2(out) + 2-oxoglutarate(in) = prostaglandin E2(in) + 2-oxoglutarate(out). It carries out the reaction prostaglandin E2(out) + glutarate(in) = prostaglandin E2(in) + glutarate(out). It catalyses the reaction urate(in) + glutarate(out) = urate(out) + glutarate(in). The catalysed reaction is taurocholate(out) + 2-oxoglutarate(in) = taurocholate(in) + 2-oxoglutarate(out). The enzyme catalyses dehydroepiandrosterone 3-sulfate(out) + 2-oxoglutarate(in) = dehydroepiandrosterone 3-sulfate(in) + 2-oxoglutarate(out). It carries out the reaction kynurenate(out) + a dicarboxylate(in) = kynurenate(in) + a dicarboxylate(out). It catalyses the reaction (indol-3-yl)acetate(out) + a dicarboxylate(in) = (indol-3-yl)acetate(in) + a dicarboxylate(out). The catalysed reaction is indoxyl sulfate(out) + a dicarboxylate(in) = indoxyl sulfate(in) + a dicarboxylate(out). The enzyme catalyses N-benzoylglycine(out) + a dicarboxylate(in) = N-benzoylglycine(in) + a dicarboxylate(out). It carries out the reaction 3-carboxy-4-methyl-5-propyl-2-furanpropanoate(out) + a dicarboxylate(in) = 3-carboxy-4-methyl-5-propyl-2-furanpropanoate(in) + a dicarboxylate(out). It catalyses the reaction (6R)-L-erythro-5,6,7,8-tetrahydrobiopterin(out) + a dicarboxylate(in) = (6R)-L-erythro-5,6,7,8-tetrahydrobiopterin(in) + a dicarboxylate(out). The catalysed reaction is L-erythro-7,8-dihydrobiopterin(out) + a dicarboxylate(in) = L-erythro-7,8-dihydrobiopterin(in) + a dicarboxylate(out). The enzyme catalyses L-sepiapterin(out) + a dicarboxylate(in) = L-sepiapterin(in) + a dicarboxylate(out). Functionally, functions as an organic anion/dicarboxylate exchanger that couples organic anion uptake indirectly to the sodium gradient. Transports organic anions such as estrone 3-sulfate (E1S) and urate in exchange for dicarboxylates such as glutarate or ketoglutarate (2-oxoglutarate). Plays an important role in the excretion of endogenous and exogenous organic anions, especially from the kidney and the brain. E1S transport is pH- and chloride-dependent and may also involve E1S/cGMP exchange. Responsible for the transport of prostaglandin E2 (PGE2) and prostaglandin F2(alpha) (PGF2(alpha)) in the basolateral side of the renal tubule. Involved in the transport of neuroactive tryptophan metabolites kynurenate and xanthurenate. Functions as a biopterin transporters involved in the uptake and the secretion of coenzymes tetrahydrobiopterin (BH4), dihydrobiopterin (BH2) and sepiapterin to urine, thereby determining baseline levels of blood biopterins. May be involved in the basolateral transport of steviol, a metabolite of the popular sugar substitute stevioside. May participate in the detoxification/ renal excretion of drugs and xenobiotics, such as the histamine H(2)-receptor antagonists fexofenadine and cimetidine, the antibiotic benzylpenicillin (PCG), the anionic herbicide 2,4-dichloro-phenoxyacetate (2,4-D), the diagnostic agent p-aminohippurate (PAH), the antiviral acyclovir (ACV), and the mycotoxin ochratoxin (OTA), by transporting these exogenous organic anions across the cell membrane in exchange for dicarboxylates such as 2-oxoglutarate. Contributes to the renal uptake of potent uremic toxins (indoxyl sulfate (IS), indole acetate (IA), hippurate/N-benzoylglycine (HA) and 3-carboxy-4-methyl-5-propyl-2-furanpropionate (CMPF)), pravastatin, PCG, E1S and dehydroepiandrosterone sulfate (DHEAS), and is partly involved in the renal uptake of temocaprilat (an angiotensin-converting enzyme (ACE) inhibitor). May contribute to the release of cortisol in the adrenals. Involved in one of the detoxification systems on the choroid plexus (CP), removes substrates such as E1S or taurocholate (TC), PCG, 2,4-D and PAH, from the cerebrospinal fluid (CSF) to the blood for eventual excretion in urine and bile. Also contributes to the uptake of several other organic compounds such as the prostanoids prostaglandin E(2) and prostaglandin F(2-alpha), L-carnitine, and the therapeutic drugs allopurinol, 6-mercaptopurine (6-MP) and 5-fluorouracil (5-FU). Mediates the transport of PAH, PCG, and the statins pravastatin and pitavastatin, from the cerebrum into the blood circulation across the blood-brain barrier (BBB). In summary, plays a role in the efflux of drugs and xenobiotics, helping reduce their undesired toxicological effects on the body. This chain is Organic anion transporter 3 (SLC22A8), found in Oryctolagus cuniculus (Rabbit).